The sequence spans 139 residues: Large ribosomal subunit protein mL42 (139 aa).

The transit peptide at 1–32 (MAVAAVKWVMSKRTILKHLFPVQNGALYCVCH) directs the protein to the mitochondrion.

It belongs to the mitochondrion-specific ribosomal protein mL42 family. In terms of assembly, component of the mitochondrial ribosome large subunit (39S) which comprises a 16S rRNA and about 50 distinct proteins. Component of the mitochondrial ribosome small subunit (28S) which comprises a 12S rRNA and about 30 distinct proteins.

Its subcellular location is the mitochondrion. This is Large ribosomal subunit protein mL42 (MRPL42) from Pongo abelii (Sumatran orangutan).